A 227-amino-acid polypeptide reads, in one-letter code: MRRAEVARLIDHTLLAPAATDEEVLALCAEAARLGVGAVCVAPTHVYLAAASTYRSSHEAEPAFAVASVIGFPHGTHLTVIKAEEARRAVADGATEIDMVIDIANALDENWRAIETEISEVRLSVPPHVILKVILETALLPDANIIAACRAAEAGGAEFVKTSTGFHPAGGASVRAVRAMAEAVGGRLGIKASGGIRTAEKAKDMLEAGATRLGLSASADVLAGFPA.

Asp-98 (proton donor/acceptor) is an active-site residue. The Schiff-base intermediate with acetaldehyde role is filled by Lys-161. Lys-191 serves as the catalytic Proton donor/acceptor.

This sequence belongs to the DeoC/FbaB aldolase family. DeoC type 1 subfamily.

It is found in the cytoplasm. The enzyme catalyses 2-deoxy-D-ribose 5-phosphate = D-glyceraldehyde 3-phosphate + acetaldehyde. It participates in carbohydrate degradation; 2-deoxy-D-ribose 1-phosphate degradation; D-glyceraldehyde 3-phosphate and acetaldehyde from 2-deoxy-alpha-D-ribose 1-phosphate: step 2/2. Its function is as follows. Catalyzes a reversible aldol reaction between acetaldehyde and D-glyceraldehyde 3-phosphate to generate 2-deoxy-D-ribose 5-phosphate. The sequence is that of Deoxyribose-phosphate aldolase from Frankia alni (strain DSM 45986 / CECT 9034 / ACN14a).